A 423-amino-acid polypeptide reads, in one-letter code: Glycine amidinotransferase, mitochondrial (423 aa).

A mitochondrion-targeting transit peptide spans 1-43; the sequence is MLRVRCLRGGSRGAEALHYIGSRLGRTVTGWVQRTFQSTQAAT. A phosphoserine mark is found at Ser-46 and Ser-49. Asp-170 contacts arginine. Catalysis depends on residues Asp-254 and His-303. Residues Asp-305, Arg-322, Ser-354, and Ser-355 each contribute to the arginine site. Position 385 is an N6-acetyllysine (Lys-385). Cys-407 acts as the Amidino-cysteine intermediate in catalysis.

This sequence belongs to the amidinotransferase family. As to quaternary structure, homodimer.

The protein localises to the mitochondrion inner membrane. The enzyme catalyses L-arginine + glycine = guanidinoacetate + L-ornithine. The catalysed reaction is 4-aminobutanoate + L-arginine = 4-guanidinobutanoate + L-ornithine. It catalyses the reaction beta-alanine + L-arginine = 3-guanidinopropanoate + L-ornithine. It carries out the reaction taurine + L-arginine = taurocyamine + L-ornithine. It participates in amine and polyamine biosynthesis; creatine biosynthesis; creatine from L-arginine and glycine: step 1/2. Its function is as follows. Transamidinase that catalyzes the transfer of the amidino group of L-arginine onto the amino moiety of acceptor metabolites such as glycine, beta-alanine, gamma-aminobutyric acid (GABA) and taurine yielding the corresponding guanidine derivatives. Catalyzes the rate-limiting step of creatine biosynthesis, namely the transfer of the amidino group from L-arginine to glycine to generate guanidinoacetate, which is then methylated by GAMT to form creatine. Provides creatine as a source for ATP generation in tissues with high energy demands, in particular skeletal muscle, heart and brain. The protein is Glycine amidinotransferase, mitochondrial (GATM) of Bos taurus (Bovine).